We begin with the raw amino-acid sequence, 837 residues long: Zinc fingers and homeoboxes protein 2 (837 aa).

An interaction with EFNB1 region spans residues 27 to 77 (VDRAKEKGIGTPQPDVAKDSWAAELENSSKENEVIEVKSMGESQSKKLQGG). A Phosphothreonine modification is found at Thr-37. A Glycyl lysine isopeptide (Lys-Gly) (interchain with G-Cter in SUMO2) cross-link involves residue Lys-64. C2H2-type zinc fingers lie at residues 78–101 (YECKYCPYSTQNLNEFTEHVDMQH) and 110–133 (YVCAECNFTTKKYDSLSDHNSKFH). Residues 164-180 (SITTSGPGTGDSDSGIS) are compositionally biased toward low complexity. Residues 164–204 (SITTSGPGTGDSDSGISVSKTPIMKPGKPKADAKKVPKKPE) are disordered. The segment covering 192–204 (PKADAKKVPKKPE) has biased composition (basic and acidic residues). The tract at residues 195–358 (DAKKVPKKPE…PAQLAPTKVT (164 aa)) is required for homodimerization. Thr-207 is modified (phosphothreonine). 4 DNA-binding regions (homeobox) span residues 263-324 (NTTK…WSPE), 439-501 (TPAS…IVHI), 530-591 (PQKF…EQAV), and 628-690 (SPSP…TVKW). A required for repressor activity region spans residues 263–446 (NTTKYNSALD…PLTPASDRKK (184 aa)). A required for interaction with NFYA region spans residues 263–497 (NTTKYNSALD…SDHRYRCQRG (235 aa)). Residues 317–446 (HGISWSPEEV…PLTPASDRKK (130 aa)) form a required for nuclear localization region. The tract at residues 404–445 (GQKRPLVTPQAAPEPKRPHIAQVPEPPPKVANPPLTPASDRK) is disordered. A compositionally biased stretch (pro residues) spans 427-439 (PEPPPKVANPPLT). Lys-455 participates in a covalent cross-link: Glycyl lysine isopeptide (Lys-Gly) (interchain with G-Cter in SUMO2). The interval 755–837 (PAKDCLPAKP…DCVPAEAGQA (83 aa)) is disordered. Ser-825 and Ser-827 each carry phosphoserine.

This sequence belongs to the ZHX family. As to quaternary structure, homodimer (via homeobox domain). Heterodimer with ZHX1 (via homeobox domain 1). Heterodimer with ZHX3 (via homeobox domain 1). Heterodimerization with ZHX1 is not necessary for repressor activity. Interacts (via homeobox domain) with NFYA (via N-terminus). Interacts with EFNB1 intracellular domain peptide; the interaction enhances ZHX2 transcriptional repression activity. Ubiquitously expressed. Expressed in podocytes.

Its subcellular location is the nucleus. Acts as a transcriptional repressor. Represses the promoter activity of the CDC25C gene stimulated by NFYA. May play a role in retinal development where it regulates the composition of bipolar cell populations, by promoting differentiation of bipolar OFF-type cells. In the brain, may promote maintenance and suppress differentiation of neural progenitor cells in the developing cortex. The sequence is that of Zinc fingers and homeoboxes protein 2 (ZHX2) from Homo sapiens (Human).